We begin with the raw amino-acid sequence, 138 residues long: MSVVIDGKYLILKDRHYTETDEWILINGNIATVGITDYAQKKLKDIVGIELPQVGREVTIGEQVAVVESVKAAADIFSPLSGSVLEVNKELQSSPETINKDPYGRGWIFKLKIKDEKEVSKLLNFEQYIISIKQREGI.

The Lipoyl-binding domain occupies 30-112 (IATVGITDYA…YGRGWIFKLK (83 aa)). Lys-71 is subject to N6-lipoyllysine.

The protein belongs to the GcvH family. As to quaternary structure, the glycine cleavage system is composed of four proteins: P, T, L and H. (R)-lipoate is required as a cofactor.

The glycine cleavage system catalyzes the degradation of glycine. The H protein shuttles the methylamine group of glycine from the P protein to the T protein. This is Probable glycine cleavage system H protein 1 from Sulfolobus acidocaldarius (strain ATCC 33909 / DSM 639 / JCM 8929 / NBRC 15157 / NCIMB 11770).